Reading from the N-terminus, the 394-residue chain is MPTSNPAKPLDGFRVLDFTQNVAGPLAGQVLVDLGAEVIKVEAPGGEAARQITSVLPGRPPLATYFLPNNRGKKSVTVDLTTEQAKQQMLRLADTADVVLEAFRPGTMEKLGLGPDDLRSRNPNLIYARLTAYGGNGPHGSRPGIDLVVAAEAGMTTGMPTPEGKPQIIPFQLVDNASGHVLAQAVLAALLHRERNGVADVVQVAMYDVAVGLQANQLMMHLNRAASDQPKPEPAPKAKRRKGVGFATQPSDAFRTADGYIVISAYVPKHWQKLCYLIGRPDLVEDQRFAEQRSRSINYAELTAELELALASKTATEWVQLLQANGLMACLAHTWKQVVDTPLFAENDLTLEVGRGADTITVIRTPARYASFRAVVTDPPPTAGEHNAVFLARP.

The active-site Nucleophile is aspartate 175.

The protein belongs to the CoA-transferase III family. Homodimer.

In terms of biological role, probably involved in fatty acid metabolism. Binds to fatty acyl-CoAs of varying carbon chain lengths, with the highest binding affinity for palmitoyl-CoA (C16:0). In vitro, alters the cell wall lipid profile and protects mycobacteria from acidic, oxidative and antibiotic stress. May play a significant role in host-pathogen interaction. This is Probable fatty acyl-CoA transferase Rv3272 from Mycobacterium tuberculosis (strain ATCC 25618 / H37Rv).